We begin with the raw amino-acid sequence, 297 residues long: MPETTQDTCASAKDSPFFIKNLLNSDSKPSKPKPILAPTKAGLDGSFSLSQVGEINFPRFELPTQRFALPAYLERASAWWYPYTLSASAHLHRTEAAQKARDSSPTTGTDRDSPELVLKSDPDAKDDEDDNKSGDEIVLEEGDTEDGKKEGGIDDWKKSDDGADKKPCRKKKTRTVFSRSQVFQLESTFDMKRYLSSSERAGLAASLHLTETQVKIWFQNRRNKWKRQLAAELEAANLSHAAAQRIVRVPILYHENSASESTNTAGNVPVSQPLLTFPHPVYYSHPIVTSVPLLRPV.

Disordered regions lie at residues 24 to 43 (NSDSKPSKPKPILAPTKAGL) and 96 to 172 (AAQK…RKKK). 2 stretches are compositionally biased toward basic and acidic residues: residues 109 to 123 (TDRDSPELVLKSDPD) and 145 to 166 (EDGKKEGGIDDWKKSDDGADKK). Positions 170-229 (KKKTRTVFSRSQVFQLESTFDMKRYLSSSERAGLAASLHLTETQVKIWFQNRRNKWKRQL) form a DNA-binding region, homeobox.

This sequence belongs to the HMX homeobox family. In terms of tissue distribution, expressed in the ear placode and vesicle and in cells forming the vestibulo-acoustic ganglion. Also expressed in the lateral line.

Its subcellular location is the nucleus. Its function is as follows. Transcription factor involved in specification of neuronal cell types and which is required for inner ear and hypothalamus development. Binds to the 5'-CAAGTG-3' core sequence. The polypeptide is Homeobox protein HMX3 (hmx3) (Danio rerio (Zebrafish)).